The following is a 90-amino-acid chain: Small ribosomal subunit protein uS15c (90 aa).

The protein belongs to the universal ribosomal protein uS15 family. In terms of assembly, part of the 30S ribosomal subunit.

It localises to the plastid. Its subcellular location is the chloroplast. The polypeptide is Small ribosomal subunit protein uS15c (rps15) (Mesostigma viride (Green alga)).